The sequence spans 368 residues: Chaperone protein DnaJ (368 aa).

The J domain occupies Asp5–Gly69. The segment at Gly126–Lys208 adopts a CR-type zinc-finger fold. 8 residues coordinate Zn(2+): Cys139, Cys142, Cys156, Cys159, Cys182, Cys185, Cys196, and Cys199. CXXCXGXG motif repeat units follow at residues Cys139–Gly146, Cys156–Gly163, Cys182–Gly189, and Cys196–Gly203.

It belongs to the DnaJ family. In terms of assembly, homodimer. It depends on Zn(2+) as a cofactor.

The protein resides in the cytoplasm. In terms of biological role, participates actively in the response to hyperosmotic and heat shock by preventing the aggregation of stress-denatured proteins and by disaggregating proteins, also in an autonomous, DnaK-independent fashion. Unfolded proteins bind initially to DnaJ; upon interaction with the DnaJ-bound protein, DnaK hydrolyzes its bound ATP, resulting in the formation of a stable complex. GrpE releases ADP from DnaK; ATP binding to DnaK triggers the release of the substrate protein, thus completing the reaction cycle. Several rounds of ATP-dependent interactions between DnaJ, DnaK and GrpE are required for fully efficient folding. Also involved, together with DnaK and GrpE, in the DNA replication of plasmids through activation of initiation proteins. The chain is Chaperone protein DnaJ from Exiguobacterium sp. (strain ATCC BAA-1283 / AT1b).